A 665-amino-acid polypeptide reads, in one-letter code: Adenylate cyclase 1 (665 aa).

The interval 1 to 25 (MLQRSESGFKDIESMQDSNADKPSR) is disordered. The segment covering 7 to 24 (SGFKDIESMQDSNADKPS) has biased composition (basic and acidic residues). A run of 2 helical transmembrane segments spans residues 33–53 (SLLG…LVGL) and 373–393 (AVSG…AHLI). The HAMP domain occupies 394–444 (TKSLNQLTDSANRLQDLDFATPIDVSSHVAEISTLNGAMNRARDAIFTFAL). In terms of domain architecture, Guanylate cyclase spans 471 to 603 (TAMFTDIYDF…DTVNVASRLE (133 aa)). Mg(2+) contacts are provided by aspartate 476 and aspartate 520.

The protein belongs to the adenylyl cyclase class-3 family. The cofactor is Mg(2+).

The protein resides in the cell membrane. It carries out the reaction ATP = 3',5'-cyclic AMP + diphosphate. Plays essential roles in regulation of cellular metabolism by catalyzing the synthesis of a second messenger, cAMP. The polypeptide is Adenylate cyclase 1 (cya1) (Rhizobium meliloti (strain 1021) (Ensifer meliloti)).